A 207-amino-acid polypeptide reads, in one-letter code: Ras-related protein Rab-8A (207 aa).

Residues Ser17, Gly18, Val19, Gly20, Lys21, Thr22, Cys23, Ser35, Ser39, and Thr40 each contribute to the GTP site. Thr22 contributes to the Mg(2+) binding site. Short sequence motifs (switch) lie at residues 31–45 (DAFNSTFISTIGIDF) and 63–80 (DTAGQERFRTITTAYYRG). Mg(2+)-binding residues include Thr40 and Asp63. Position 66 (Gly66) interacts with GTP. Position 72 is a phosphothreonine (Thr72). GTP contacts are provided by Asn121, Lys122, Asp124, Ala152, and Lys153. Phosphoserine is present on residues Ser181 and Ser185. Residue Cys204 is modified to Cysteine methyl ester. Cys204 carries S-geranylgeranyl cysteine lipidation. The propeptide at 205–207 (VLL) is removed in mature form.

The protein belongs to the small GTPase superfamily. Rab family. In terms of assembly, interacts (GTP-bound form) with MICALL1; regulates RAB8A association with recycling endosomes. Interacts with MICALL2; competes with RAB13 and is involved in E-cadherin endocytic recycling. Interacts (GTP-bound form) with MICAL1, MICALCL, MICAL3, EHBP1 and EHBP1L1; at least in case of MICAL1, MICALCL, MICAL3 and EHBP1L1 two molecules of RAB8A can bind to one molecule of the effector protein; ternary complexes of RAB8A, RAB13 and either MICAL1 or EHBP1L1 are possible. Interacts with EHD1. Interacts with MAP4K2 and SYTL4. Interacts with SGSM1 and SGSM3. Interacts with RABIF, RIMS2, RPH3A and RPH3A. Interacts with OPTN. Interacts with RAB3IP, RAB3IP functions as guanine exchange factor (GEF). Interacts with MYO5B. Interacts with CIMAP3. Interacts with BIRC6/bruce. Interacts with OCRL. Interacts with AHI1. Interacts with DCDC1. Interacts with LRRK2; interaction facilitates phosphorylation of Thr-72. Interacts with RAB31P, GDI1, GDI2, CHM, CHML, RABGGTA, RABGGTB, TBC1D15 and INPP5B; these interactions are dependent on Thr-72 not being phosphorylated. Interacts with RILPL1 and RILPL2; these interactions are dependent on the phosphorylation of Thr-72 by LRRK2. Interacts with DZIP1; prevents inhibition by the GDP-dissociation inhibitor GDI2. Interacts (in GDP-bound form) with RAB3IP/Rabin8, RAB3IP functions as guanine exchange factor (GEF) towards RAB8A. Interacts (in GDP-bound form) with RPGR, RPGR functions as GEF towards RAB8A. Requires Mg(2+) as cofactor. Post-translationally, phosphorylation of Thr-72 in the switch II region by LRRK2 prevents the association of RAB regulatory proteins, including CHM, CHML and RAB GDP dissociation inhibitors GDI1 and GDI2. Phosphorylation by LRRK2 is required for localization to stressed lysosomes.

The protein localises to the cell membrane. It localises to the golgi apparatus. Its subcellular location is the endosome membrane. The protein resides in the recycling endosome membrane. It is found in the cell projection. The protein localises to the cilium. It localises to the cytoplasmic vesicle. Its subcellular location is the phagosome membrane. The protein resides in the cytoplasm. It is found in the cytoskeleton. The protein localises to the microtubule organizing center. It localises to the centrosome. Its subcellular location is the centriole. The protein resides in the cilium basal body. It is found in the midbody. The protein localises to the lysosome. The catalysed reaction is GTP + H2O = GDP + phosphate + H(+). With respect to regulation, regulated by guanine nucleotide exchange factors (GEFs) such as RAB3IP/Rabin8 and RPGR which promote the exchange of bound GDP for free GTP, GTPase activating proteins (GAPs) which increase the GTP hydrolysis activity, and GDP dissociation inhibitors (GDIs) which inhibit the dissociation of the nucleotide from the GTPase. Activated in response to insulin. Functionally, the small GTPases Rab are key regulators of intracellular membrane trafficking, from the formation of transport vesicles to their fusion with membranes. Rabs cycle between an inactive GDP-bound form and an active GTP-bound form that is able to recruit to membranes different sets of downstream effectors directly responsible for vesicle formation, movement, tethering and fusion. RAB8A is involved in polarized vesicular trafficking and neurotransmitter release. Together with RAB11A, RAB3IP, the exocyst complex, PARD3, PRKCI, ANXA2, CDC42 and DNMBP promotes transcytosis of PODXL to the apical membrane initiation sites (AMIS), apical surface formation and lumenogenesis. Regulates the compacted morphology of the Golgi. Together with MYO5B and RAB11A participates in epithelial cell polarization. Also involved in membrane trafficking to the cilium and ciliogenesis. Together with MICALL2, may also regulate adherens junction assembly. May play a role in insulin-induced transport to the plasma membrane of the glucose transporter GLUT4 and therefore play a role in glucose homeostasis. Involved in autophagy. Participates in the export of a subset of neosynthesized proteins through a Rab8-Rab10-Rab11-dependent endososomal export route. Targeted to and stabilized on stressed lysosomes through LRRK2 phosphorylation. Suppresses stress-induced lysosomal enlargement through EHBP1 and EHNP1L1 effector proteins. In Bos taurus (Bovine), this protein is Ras-related protein Rab-8A (RAB8A).